A 199-amino-acid chain; its full sequence is 3-isopropylmalate dehydratase small subunit (199 aa).

It belongs to the LeuD family. LeuD type 1 subfamily. Heterodimer of LeuC and LeuD.

The catalysed reaction is (2R,3S)-3-isopropylmalate = (2S)-2-isopropylmalate. It functions in the pathway amino-acid biosynthesis; L-leucine biosynthesis; L-leucine from 3-methyl-2-oxobutanoate: step 2/4. Its function is as follows. Catalyzes the isomerization between 2-isopropylmalate and 3-isopropylmalate, via the formation of 2-isopropylmaleate. This Tolumonas auensis (strain DSM 9187 / NBRC 110442 / TA 4) protein is 3-isopropylmalate dehydratase small subunit.